A 902-amino-acid chain; its full sequence is Cytosolic 10-formyltetrahydrofolate dehydrogenase (902 aa).

The hydrolase domain stretch occupies residues 1–310 (MKIAVIGQSL…PASQFFKGSA (310 aa)). Phosphoserine is present on Ser-9. Lys-38 is subject to N6-succinyllysine. (6R)-10-formyltetrahydrofolate is bound at residue 88-90 (QFI). His-106 serves as the catalytic Proton donor. Asp-142 contributes to the (6R)-10-formyltetrahydrofolate binding site. Positions 318-395 (EEELATAEAV…DFIQLLVRKL (78 aa)) constitute a Carrier domain. The residue at position 354 (Ser-354) is an O-(pantetheine 4'-phosphoryl)serine. Residues 417–902 (TLQMPYQLFI…LRIKTVTFEY (486 aa)) are aldehyde dehydrogenase domain. Residues 571–573 (IPW) and 597–600 (KPAQ) contribute to the NADP(+) site. A phosphoserine mark is found at Ser-629 and Ser-631. NADP(+) contacts are provided by residues 630–635 (GSLVGQ) and 650–651 (GS). Lys-660 is subject to N6-succinyllysine. The active-site Proton acceptor is the Glu-673. 673 to 674 (EL) is an NADP(+) binding site. The active-site Proton donor is the Cys-707. Lys-757 is a binding site for NADP(+). Lys-767 carries the N6-succinyllysine modification. NADP(+) is bound at residue 804 to 806 (ESF). Ser-825 is modified (phosphoserine). Lys-882 carries the N6-acetyllysine modification.

The protein in the N-terminal section; belongs to the GART family. This sequence in the C-terminal section; belongs to the aldehyde dehydrogenase family. ALDH1L subfamily. As to quaternary structure, homotetramer. Phosphopantetheinylation at Ser-354 by AASDHPPT is required for the formyltetrahydrofolate dehydrogenase activity. As to expression, highly expressed in liver (at protein level). Also expressed in pancreas, brain and lung (at protein level).

The protein resides in the cytoplasm. It is found in the cytosol. It carries out the reaction (6R)-10-formyltetrahydrofolate + NADP(+) + H2O = (6S)-5,6,7,8-tetrahydrofolate + CO2 + NADPH + H(+). Cytosolic 10-formyltetrahydrofolate dehydrogenase that catalyzes the NADP(+)-dependent conversion of 10-formyltetrahydrofolate to tetrahydrofolate and carbon dioxide. May also have an NADP(+)-dependent aldehyde dehydrogenase activity towards formaldehyde, acetaldehyde, propionaldehyde, and benzaldehyde. This chain is Cytosolic 10-formyltetrahydrofolate dehydrogenase, found in Mus musculus (Mouse).